Consider the following 327-residue polypeptide: MKIVFAGTPEPAAVALEHLIADERIEVVAVVTQPDAKRGRGRSLRPSKVAEVAEEAAIPTYKWPSLKAGTESGDEARAVLGDLAAQGVTAAAVVAYGNLIPKDILDVFEHGWVNLHYSLLPRWRGAAPVQAALAAGDETTGASIFRIEEGLDTGPVAAQLTQKIGLEDTADDLLASLTYAGRELLADTLVAMDEGKAELSGQDDAQATHAPKIHPADAQIDWSQPAEVIQRVARAHTPAPGAWTLLDGQRYKIGMLLPSDPADVAELGPGEVVASPKKVFVGTGTGPLEITRIQPPGKKMMEAAAWARGQQELLAGRPTFSARETGE.

118–121 contacts (6S)-5,6,7,8-tetrahydrofolate; the sequence is SLLP.

This sequence belongs to the Fmt family.

It catalyses the reaction L-methionyl-tRNA(fMet) + (6R)-10-formyltetrahydrofolate = N-formyl-L-methionyl-tRNA(fMet) + (6S)-5,6,7,8-tetrahydrofolate + H(+). In terms of biological role, attaches a formyl group to the free amino group of methionyl-tRNA(fMet). The formyl group appears to play a dual role in the initiator identity of N-formylmethionyl-tRNA by promoting its recognition by IF2 and preventing the misappropriation of this tRNA by the elongation apparatus. This Corynebacterium jeikeium (strain K411) protein is Methionyl-tRNA formyltransferase.